The chain runs to 621 residues: Nitrate reductase [NADH] 1 (621 aa).

Residues 249–324 (GKEFTMSEVR…LDTYRIGELI (76 aa)) form the Cytochrome b5 heme-binding domain. 2 residues coordinate heme: His284 and His307. Residues 361-473 (REKIHCRLVG…KGPLGHVEYT (113 aa)) form the FAD-binding FR-type domain. Residues 413–416 (RAYT), 430–432 (LVK), Phe435, 447–449 (LMT), Ser497, and Thr500 contribute to the FAD site.

This sequence belongs to the nitrate reductase family. As to quaternary structure, homodimer. The cofactor is FAD. Requires heme as cofactor. It depends on Mo-molybdopterin as a cofactor.

The enzyme catalyses nitrite + NAD(+) + H2O = nitrate + NADH + H(+). Its function is as follows. Nitrate reductase is a key enzyme involved in the first step of nitrate assimilation in plants, fungi and bacteria. This chain is Nitrate reductase [NADH] 1, found in Zea mays (Maize).